The chain runs to 469 residues: Citrate synthase, mitochondrial (469 aa).

The N-terminal 28 residues, 1 to 28, are a transit peptide targeting the mitochondrion; that stretch reads MAFFRTVTKLRSRLGQPPSLRDSVRCLQ. Residues histidine 304, histidine 350, and aspartate 405 contribute to the active site.

It belongs to the citrate synthase family. In terms of assembly, homodimer.

The protein localises to the mitochondrion matrix. It catalyses the reaction oxaloacetate + acetyl-CoA + H2O = citrate + CoA + H(+). It functions in the pathway carbohydrate metabolism; tricarboxylic acid cycle; isocitrate from oxaloacetate: step 1/2. This chain is Citrate synthase, mitochondrial (MCSI), found in Fragaria ananassa (Strawberry).